The following is a 550-amino-acid chain: Chaperonin GroEL (550 aa).

ATP-binding positions include 30–33 (TLGP), Lys-51, 87–91 (DGTTT), Gly-415, and Asp-495.

The protein belongs to the chaperonin (HSP60) family. Forms a cylinder of 14 subunits composed of two heptameric rings stacked back-to-back. Interacts with the co-chaperonin GroES.

It is found in the cytoplasm. The enzyme catalyses ATP + H2O + a folded polypeptide = ADP + phosphate + an unfolded polypeptide.. Functionally, together with its co-chaperonin GroES, plays an essential role in assisting protein folding. The GroEL-GroES system forms a nano-cage that allows encapsulation of the non-native substrate proteins and provides a physical environment optimized to promote and accelerate protein folding. The protein is Chaperonin GroEL of Shewanella piezotolerans (strain WP3 / JCM 13877).